Here is a 156-residue protein sequence, read N- to C-terminus: ATP synthase subunit b (156 aa).

Residues 7–27 traverse the membrane as a helical segment; that stretch reads FFAQMVVFFILWWVVAKFIWP.

The protein belongs to the ATPase B chain family. F-type ATPases have 2 components, F(1) - the catalytic core - and F(0) - the membrane proton channel. F(1) has five subunits: alpha(3), beta(3), gamma(1), delta(1), epsilon(1). F(0) has three main subunits: a(1), b(2) and c(10-14). The alpha and beta chains form an alternating ring which encloses part of the gamma chain. F(1) is attached to F(0) by a central stalk formed by the gamma and epsilon chains, while a peripheral stalk is formed by the delta and b chains.

It localises to the cell inner membrane. Functionally, f(1)F(0) ATP synthase produces ATP from ADP in the presence of a proton or sodium gradient. F-type ATPases consist of two structural domains, F(1) containing the extramembraneous catalytic core and F(0) containing the membrane proton channel, linked together by a central stalk and a peripheral stalk. During catalysis, ATP synthesis in the catalytic domain of F(1) is coupled via a rotary mechanism of the central stalk subunits to proton translocation. In terms of biological role, component of the F(0) channel, it forms part of the peripheral stalk, linking F(1) to F(0). This Cupriavidus taiwanensis (strain DSM 17343 / BCRC 17206 / CCUG 44338 / CIP 107171 / LMG 19424 / R1) (Ralstonia taiwanensis (strain LMG 19424)) protein is ATP synthase subunit b.